Here is a 244-residue protein sequence, read N- to C-terminus: Mitophagy receptor atg43 (244 aa).

The tract at residues 1–24 is disordered; the sequence is MSSESKGIPIPRSDSNKTSDVSSW. The Cytoplasmic portion of the chain corresponds to 1–198; sequence MSSESKGIPI…LVALITLRDH (198 aa). Residues 28-31 carry the atg8 interacting motif (AIM) motif; that stretch reads YELI. Residues 105-131 form a disordered region; the sequence is SLSLLQSKEEDDSSNWETEDSESAVEE. The segment covering 113 to 131 has biased composition (acidic residues); the sequence is EEDDSSNWETEDSESAVEE. The interval 165–184 is involved in MIM complex binding. Required for normal vegetative cell population growth but is dispensable for mitophagy; it reads PPIPDLRFQQSYLQSIQRAN. A helical membrane pass occupies residues 199 to 215; sequence VLYPFLSGGMWVFVRHI. Residues 216–244 lie on the Mitochondrial intermembrane side of the membrane; that stretch reads FQFLKLQEKGFHFGQSLRRNLGLFSTFKD.

Interacts (via N-terminal atg8 interacting motif) with atg8; the interaction is direct. Interacts with the mitochondrial outer import machinery (MIM) complex subunits mim1 and mim2.

The protein localises to the mitochondrion outer membrane. Its function is as follows. Mitophagy receptor that tethers atg8 to the mitochondrial outer membrane to promote selective autophagy. The sequence is that of Mitophagy receptor atg43 from Schizosaccharomyces pombe (strain 972 / ATCC 24843) (Fission yeast).